A 211-amino-acid polypeptide reads, in one-letter code: MRLTAKQVIWLKVCLHLAGLLPFLWLVWAINHGGLGADPVKDIQHFTGRTALKFLLAALLITPLARYAKQPLLIRTRRLLGLWCFAWATLHLTSYALLELGVNNLALLGKELITRPYLTLGIISWVILLALAFTSTQSMQRKLGKHWQQLHNFVYLVAILAPIHYLWSVKIISPQPLIYAGLAVLLLALRYKKLLSLFNRLRKQAHNKLSL.

Helical transmembrane passes span 8–28, 54–74, 82–102, 116–136, 153–173, and 178–198; these read VIWLKVCLHLAGLLPFLWLVW, FLLAALLITPLARYAKQPLLI, LWCFAWATLHLTSYALLELGV, PYLTLGIISWVILLALAFTST, FVYLVAILAPIHYLWSVKIIS, and IYAGLAVLLLALRYKKLLSLF.

Belongs to the MsrQ family. Heterodimer of a catalytic subunit (MsrP) and a heme-binding subunit (MsrQ). Requires FMN as cofactor. Heme b is required as a cofactor.

It localises to the cell inner membrane. Its function is as follows. Part of the MsrPQ system that repairs oxidized periplasmic proteins containing methionine sulfoxide residues (Met-O), using respiratory chain electrons. Thus protects these proteins from oxidative-stress damage caused by reactive species of oxygen and chlorine generated by the host defense mechanisms. MsrPQ is essential for the maintenance of envelope integrity under bleach stress, rescuing a wide series of structurally unrelated periplasmic proteins from methionine oxidation, including the primary periplasmic chaperone SurA and the lipoprotein Pal. MsrQ provides electrons for reduction to the reductase catalytic subunit MsrP, using the quinone pool of the respiratory chain. This is Protein-methionine-sulfoxide reductase heme-binding subunit MsrQ from Shigella flexneri.